A 401-amino-acid polypeptide reads, in one-letter code: Tyrosine--tRNA ligase (401 aa).

A 'HIGH' region motif is present at residues 42-51 (PTAPDIHLGH). Positions 226-230 (KMSKS) match the 'KMSKS' region motif. Lys-229 lines the ATP pocket. Residues 334-394 (MGLATLLKEA…GKRKFARVRL (61 aa)) enclose the S4 RNA-binding domain.

It belongs to the class-I aminoacyl-tRNA synthetase family. TyrS type 2 subfamily. In terms of assembly, homodimer.

It localises to the cytoplasm. The enzyme catalyses tRNA(Tyr) + L-tyrosine + ATP = L-tyrosyl-tRNA(Tyr) + AMP + diphosphate + H(+). Functionally, catalyzes the attachment of tyrosine to tRNA(Tyr) in a two-step reaction: tyrosine is first activated by ATP to form Tyr-AMP and then transferred to the acceptor end of tRNA(Tyr). This is Tyrosine--tRNA ligase from Haemophilus influenzae (strain ATCC 51907 / DSM 11121 / KW20 / Rd).